The following is a 414-amino-acid chain: Probable uracil permease (414 aa).

The Cytoplasmic portion of the chain corresponds to Met1–Ser14. A helical transmembrane segment spans residues Lys15–Leu38. The Periplasmic segment spans residues Ile39–Leu42. The chain crosses the membrane as a helical span at residues Asp43–Thr62. The Cytoplasmic segment spans residues Gly63–Gln65. The chain crosses the membrane as a discontinuously helical span at residues Val66–Tyr82. Residue Phe74 coordinates uracil. Residues Gly83–Thr91 lie on the Periplasmic side of the membrane. A helical membrane pass occupies residues Thr92–Leu112. The Cytoplasmic portion of the chain corresponds to Arg113–Pro124. Residues Val125 to Ser146 form a helical membrane-spanning segment. Residues Leu147 to Tyr155 lie on the Periplasmic side of the membrane. Residues Asn156 to Ser171 traverse the membrane as a helical segment. The Cytoplasmic portion of the chain corresponds to Val172 to Gly178. Residues Leu179 to Leu199 traverse the membrane as a helical segment. Topologically, residues Gly200–Asn224 are periplasmic. The chain crosses the membrane as a helical span at residues Leu225–Ala248. Glu241 serves as a coordination point for uracil. The Cytoplasmic portion of the chain corresponds to Ile249–Pro261. Residues Gly262–Gly281 form a helical membrane-spanning segment. A discontinuously helical transmembrane segment spans residues Gly282 to Thr298. Glu290 lines the uracil pocket. The Cytoplasmic segment spans residues Arg299–Phe301. A helical membrane pass occupies residues Asn302–Cys319. The Periplasmic segment spans residues Gly320 to Ile332. The helical transmembrane segment at Val333–Ile354 threads the bilayer. Residues Arg355–Asn365 are Cytoplasmic-facing. The discontinuously helical intramembrane region spans Leu366–Ile401. Over Leu402–Glu414 the chain is Cytoplasmic.

It belongs to the nucleobase:cation symporter-2 (NCS2) (TC 2.A.40) family.

Its subcellular location is the cell inner membrane. The enzyme catalyses uracil(in) + H(+)(in) = uracil(out) + H(+)(out). In terms of biological role, transport of uracil in the cell. The chain is Probable uracil permease (uraA) from Haemophilus influenzae (strain ATCC 51907 / DSM 11121 / KW20 / Rd).